We begin with the raw amino-acid sequence, 1049 residues long: Probable ATP-dependent permease (1049 aa).

An N-terminal signal peptide occupies residues 1–25 (MGSHRRYLYYSILSFLLLSCSVVLA). The Lumenal portion of the chain corresponds to 26–324 (KQDKTPFFEG…KDPTVSWQGK (299 aa)). Residues N50, N114, N165, and N221 are each glycosylated (N-linked (GlcNAc...) asparagine). A helical membrane pass occupies residues 325–345 (LVLALTAVMVLALFTFATFYI). Topologically, residues 346–463 (SKSPLFRNGL…ISMDRKSFSK (118 aa)) are cytoplasmic. The 248-residue stretch at 384-631 (LSFENITYSV…LRNEGYICPD (248 aa)) folds into the ABC transporter domain. ATP is bound at residue 423 to 430 (GGSGAGKT). Residues 464–481 (IIGFVDQDDFLLPTLTVF) form a helical membrane-spanning segment. Over 482-793 (ETVLNSALLR…SFKNMYRNPK (312 aa)) the chain is Lumenal. S659 and S702 each carry phosphoserine. One can recognise an ABC transmembrane type-2 domain in the interval 793 to 1044 (KLLLGNYLLT…IMGYLALKWI (252 aa)). A helical membrane pass occupies residues 794-814 (LLLGNYLLTILLSLFLGTLYY). Residues 815–828 (NVSNDISGFQNRMG) are Cytoplasmic-facing. Residues 829-849 (LFFFILTYFGFVTFTGLSSFA) traverse the membrane as a helical segment. The Lumenal portion of the chain corresponds to 850 to 877 (LERIIFIKERSNNYYSPLAYYISKIMSE). A helical transmembrane segment spans residues 878 to 898 (VVPLRVVPPILLSLIVYPMTG). Over 899 to 909 (LNMKDNAFFKC) the chain is Cytoplasmic. Residues 910–930 (IGILILFNLGISLEILTIGII) traverse the membrane as a helical segment. Residues 931-937 (FEDLNNS) are Lumenal-facing. N935 carries N-linked (GlcNAc...) asparagine glycosylation. A helical transmembrane segment spans residues 938-958 (IILSVLVLLGSLLFSGLFINT). Residues 959–1000 (KNITNVAFKYLKNFSVFYYAYESLLINEVKTLMLKERKYGLN) lie on the Cytoplasmic side of the membrane. The chain crosses the membrane as a helical span at residues 1001–1021 (IEVPGATILSTFGFVVQNLVF). At 1022-1024 (DIK) the chain is on the lumenal side. The chain crosses the membrane as a helical span at residues 1025–1045 (ILALFNVVFLIMGYLALKWIV). Topologically, residues 1046 to 1049 (VEQK) are cytoplasmic.

It belongs to the ABC transporter superfamily. ABCG family. Eye pigment precursor importer (TC 3.A.1.204) subfamily.

The protein resides in the endoplasmic reticulum membrane. The sequence is that of Probable ATP-dependent permease (ADP1) from Saccharomyces cerevisiae (strain ATCC 204508 / S288c) (Baker's yeast).